Here is a 475-residue protein sequence, read N- to C-terminus: 3-isopropylmalate dehydratase large subunit (475 aa).

Residues Cys352, Cys413, and Cys416 each contribute to the [4Fe-4S] cluster site.

It belongs to the aconitase/IPM isomerase family. LeuC type 1 subfamily. As to quaternary structure, heterodimer of LeuC and LeuD. It depends on [4Fe-4S] cluster as a cofactor.

The catalysed reaction is (2R,3S)-3-isopropylmalate = (2S)-2-isopropylmalate. The protein operates within amino-acid biosynthesis; L-leucine biosynthesis; L-leucine from 3-methyl-2-oxobutanoate: step 2/4. Its function is as follows. Catalyzes the isomerization between 2-isopropylmalate and 3-isopropylmalate, via the formation of 2-isopropylmaleate. The polypeptide is 3-isopropylmalate dehydratase large subunit (Pseudomonas syringae pv. tomato (strain ATCC BAA-871 / DC3000)).